Here is a 162-residue protein sequence, read N- to C-terminus: SsrA-binding protein (162 aa).

This sequence belongs to the SmpB family.

Its subcellular location is the cytoplasm. Functionally, required for rescue of stalled ribosomes mediated by trans-translation. Binds to transfer-messenger RNA (tmRNA), required for stable association of tmRNA with ribosomes. tmRNA and SmpB together mimic tRNA shape, replacing the anticodon stem-loop with SmpB. tmRNA is encoded by the ssrA gene; the 2 termini fold to resemble tRNA(Ala) and it encodes a 'tag peptide', a short internal open reading frame. During trans-translation Ala-aminoacylated tmRNA acts like a tRNA, entering the A-site of stalled ribosomes, displacing the stalled mRNA. The ribosome then switches to translate the ORF on the tmRNA; the nascent peptide is terminated with the 'tag peptide' encoded by the tmRNA and targeted for degradation. The ribosome is freed to recommence translation, which seems to be the essential function of trans-translation. This chain is SsrA-binding protein, found in Sorangium cellulosum (strain So ce56) (Polyangium cellulosum (strain So ce56)).